The primary structure comprises 273 residues: Rhamnulose-1-phosphate aldolase (273 aa).

E117 is a catalytic residue. Zn(2+)-binding residues include H140, H142, and H211.

Belongs to the aldolase class II family. RhaD subfamily. Zn(2+) serves as cofactor.

Its subcellular location is the cytoplasm. It carries out the reaction L-rhamnulose 1-phosphate = (S)-lactaldehyde + dihydroxyacetone phosphate. It participates in carbohydrate degradation; L-rhamnose degradation; glycerone phosphate from L-rhamnose: step 3/3. Its function is as follows. Catalyzes the reversible cleavage of L-rhamnulose-1-phosphate to dihydroxyacetone phosphate (DHAP) and L-lactaldehyde. This chain is Rhamnulose-1-phosphate aldolase, found in Listeria innocua serovar 6a (strain ATCC BAA-680 / CLIP 11262).